Reading from the N-terminus, the 483-residue chain is Cobyric acid synthase (483 aa).

Residues 251–438 enclose the GATase cobBQ-type domain; the sequence is ALIVAVPMLP…LHGVFSADRF (188 aa). The active-site Nucleophile is the Cys333. The active site involves His430.

The protein belongs to the CobB/CobQ family. CobQ subfamily.

Its pathway is cofactor biosynthesis; adenosylcobalamin biosynthesis. Functionally, catalyzes amidations at positions B, D, E, and G on adenosylcobyrinic A,C-diamide. NH(2) groups are provided by glutamine, and one molecule of ATP is hydrogenolyzed for each amidation. This chain is Cobyric acid synthase, found in Brucella melitensis biotype 2 (strain ATCC 23457).